We begin with the raw amino-acid sequence, 390 residues long: Acetate kinase (390 aa).

Asn-10 contacts Mg(2+). Lys-17 contributes to the ATP binding site. Arg-89 lines the substrate pocket. The active-site Proton donor/acceptor is Asp-146. ATP is bound by residues 204-208 (HLGNG), 278-280 (DMR), and 323-327 (GIGEN). Glu-376 lines the Mg(2+) pocket.

Belongs to the acetokinase family. In terms of assembly, homodimer. Mg(2+) serves as cofactor. Mn(2+) is required as a cofactor.

The protein resides in the cytoplasm. The enzyme catalyses acetate + ATP = acetyl phosphate + ADP. The protein operates within metabolic intermediate biosynthesis; acetyl-CoA biosynthesis; acetyl-CoA from acetate: step 1/2. Its function is as follows. Catalyzes the formation of acetyl phosphate from acetate and ATP. Can also catalyze the reverse reaction. The sequence is that of Acetate kinase from Mycoplasma pneumoniae (strain ATCC 29342 / M129 / Subtype 1) (Mycoplasmoides pneumoniae).